The sequence spans 433 residues: 3-phosphoshikimate 1-carboxyvinyltransferase (433 aa).

Positions 21, 22, and 26 each coordinate 3-phosphoshikimate. Residue Lys21 coordinates phosphoenolpyruvate. 2 residues coordinate phosphoenolpyruvate: Gly96 and Arg124. 3-phosphoshikimate is bound by residues Ser167, Ser168, Gln169, Ser195, Asp310, and Lys337. Gln169 contributes to the phosphoenolpyruvate binding site. The active-site Proton acceptor is the Asp310. Residues Arg341, Arg384, and Lys410 each contribute to the phosphoenolpyruvate site.

This sequence belongs to the EPSP synthase family. As to quaternary structure, monomer.

It localises to the cytoplasm. It catalyses the reaction 3-phosphoshikimate + phosphoenolpyruvate = 5-O-(1-carboxyvinyl)-3-phosphoshikimate + phosphate. It participates in metabolic intermediate biosynthesis; chorismate biosynthesis; chorismate from D-erythrose 4-phosphate and phosphoenolpyruvate: step 6/7. Catalyzes the transfer of the enolpyruvyl moiety of phosphoenolpyruvate (PEP) to the 5-hydroxyl of shikimate-3-phosphate (S3P) to produce enolpyruvyl shikimate-3-phosphate and inorganic phosphate. In Clostridium botulinum (strain Alaska E43 / Type E3), this protein is 3-phosphoshikimate 1-carboxyvinyltransferase.